The sequence spans 480 residues: Nuclear receptor subfamily 6 group A member 1 (480 aa).

The disordered stretch occupies residues Met1–Arg32. The segment at residues Gln57–Glu132 is a DNA-binding region (nuclear receptor). Cys60, Cys63, Cys77, Cys80, Cys96, Cys102, Cys112, and Cys115 together coordinate Zn(2+). 2 NR C4-type zinc fingers span residues Cys60–Cys80 and Cys96–Cys120. 2 disordered regions span residues Arg131 to Glu150 and Phe162 to Ser199. Basic and acidic residues predominate over residues Glu165–His177. The interval His172–Leu253 is sufficient for interaction with UIMC1. A compositionally biased stretch (low complexity) spans Ser187 to Ser199. Positions Gln249–Glu480 constitute an NR LBD domain.

It belongs to the nuclear hormone receptor family. NR6 subfamily. As to quaternary structure, homodimer. Interacts with UIMC1. As to expression, shows highest expression in the germ cells of the adult testis.

The protein localises to the nucleus. Its function is as follows. Orphan nuclear receptor that binds to a response element containing the sequence 5'-TCAAGGTCA-3'. Acts as a regulator of embryonic stem cell pluripotency by mediating repression of POU5F1/OCT4: binds to the DR0 element within the POU5F1/OCT4 promoter and inhibits POU5F1/OCT4 expression during embryonic stem cell differentiation. Involved in the regulation of gene expression in germ cell development during gametogenesis. The protein is Nuclear receptor subfamily 6 group A member 1 (NR6A1) of Homo sapiens (Human).